A 2121-amino-acid polypeptide reads, in one-letter code: Non-reducing polyketide synthase aoiG (2121 aa).

The Starter acyltransferase (SAT) domain maps to 5–258; it reads YIFGDQTVRV…LPVSIYAPYH (254 aa). The 432-residue stretch at 386–817 folds into the Ketosynthase family 3 (KS3) domain; that stretch reads SSKIAIIGFS…GGNTAVLVED (432 aa). Residues C558, H693, and H735 each act as for beta-ketoacyl synthase activity in the active site. The Malonyl-CoA:ACP transacylase (MAT) domain maps to 921–1239; the sequence is FLFTGQGAQQ…LSVLHLAGVR (319 aa). Residues 1302–1433 are N-terminal hotdog fold; the sequence is QKILEEEMTA…CTIELQRPHQ (132 aa). Residues 1302 to 1608 enclose the PKS/mFAS DH domain; it reads QKILEEEMTA…FQKVARRVLE (307 aa). The active-site Proton acceptor; for dehydratase activity is the H1334. The tract at residues 1461–1608 is C-terminal hotdog fold; it reads THKMRRGVAY…FQKVARRVLE (148 aa). Catalysis depends on D1519, which acts as the Proton donor; for dehydratase activity. The 78-residue stretch at 1646–1723 folds into the Carrier 1 domain; sequence PHVEDAWQQV…SLRIYLNMSS (78 aa). S1683 is subject to O-(pantetheine 4'-phosphoryl)serine. Positions 1728–1752 are enriched in low complexity; the sequence is DSIETSSYPTPDESTTTTITSPSGS. The tract at residues 1728 to 1760 is disordered; that stretch reads DSIETSSYPTPDESTTTTITSPSGSDRNVGRNS. In terms of domain architecture, Carrier 2 spans 1763 to 1840; that stretch reads DGVGTTVGLV…AITAALHAIF (78 aa). S1800 is modified (O-(pantetheine 4'-phosphoryl)serine). The segment at 1872 to 1976 is TE/CLC (thioesterase/Claisen cyclase) domain; sequence TLFLFPDGSG…ILIDSPNPMG (105 aa).

Requires pantetheine 4'-phosphate as cofactor.

Non-reducing polyketide synthase; part of the gene cluster that mediates the biosynthesis of a methylated derivative of known natural products orthosporin and diaporthin. AoiG catalyzes the biosynthesis of the hexaketide isocoumarin scaffold, via condensation of one acetyl-CoA starter unit with 6 malonyl-CoA units. An oxidoreductase that has still to be identified catalyzes the stereospecific reduction of the carbonyl moiety of the hexaketide isocoumarin scaffold to generate the S-configured secondary alcohol at C-11 of orthosporin. The methyltrasferase aoiF then catalyzes the biotransformation of not only orthosporin to diaporthin but also diaporthin to the final product, by performing a tandem methylation of the polyketide core. This is Non-reducing polyketide synthase aoiG from Aspergillus oryzae (strain ATCC 42149 / RIB 40) (Yellow koji mold).